Here is a 177-residue protein sequence, read N- to C-terminus: Large ribosomal subunit protein uL6 (177 aa).

The protein belongs to the universal ribosomal protein uL6 family. In terms of assembly, part of the 50S ribosomal subunit.

Functionally, this protein binds to the 23S rRNA, and is important in its secondary structure. It is located near the subunit interface in the base of the L7/L12 stalk, and near the tRNA binding site of the peptidyltransferase center. The protein is Large ribosomal subunit protein uL6 of Bordetella pertussis (strain Tohama I / ATCC BAA-589 / NCTC 13251).